Consider the following 312-residue polypeptide: NGFGRIGSLVLRATLDRKDVKVVAINDPFIEGEYMAYMFKYDSVHGRYEGDVQGDKHGITINGEQIKTLAMMDPTQIPWGEVGADYVVESTGVFTTVDKCQAHLKGGAKKVVISAPSADAPMFVMGVNADKYDPKQHTVVSNASCTTNCLAPLAKVVNDTFGIKEALMTTVHATTATQKTVDGPSKKDWRGGRGASANIIPSSTGAAKAVGKVIPELNGKLTGMAFRVPTQDVSVVDLTCILEKPAKYEDIMAALKAASEGPMKGILGYTEDDVVSSDFVSDPASSTVDAKAGIMLSPTFVKLVSWYDNEWG.

NAD(+) contacts are provided by residues 5-6 (RI) and Asp-27. D-glyceraldehyde 3-phosphate-binding positions include 144–146 (SCT), Thr-175, 204–205 (TG), and Arg-227. Cys-145 acts as the Nucleophile in catalysis. NAD(+) is bound at residue Asn-309.

This sequence belongs to the glyceraldehyde-3-phosphate dehydrogenase family. As to quaternary structure, homotetramer.

The protein resides in the cytoplasm. It catalyses the reaction D-glyceraldehyde 3-phosphate + phosphate + NAD(+) = (2R)-3-phospho-glyceroyl phosphate + NADH + H(+). It functions in the pathway carbohydrate degradation; glycolysis; pyruvate from D-glyceraldehyde 3-phosphate: step 1/5. In terms of biological role, key enzyme in glycolysis that catalyzes the first step of the pathway by converting D-glyceraldehyde 3-phosphate (G3P) into 3-phospho-D-glyceroyl phosphate. Essential for the maintenance of cellular ATP levels and carbohydrate metabolism. This chain is Glyceraldehyde-3-phosphate dehydrogenase, cytosolic (GapC), found in Scenedesmus vacuolatus (Green alga).